Reading from the N-terminus, the 415-residue chain is MTKCNLPEVVVTGVGVTASIGQGKEDFASSLLSGRHAFDVMKRSGRQKDSRFIGAEIASLSYPDRLSKKMLRKASFSSRAALVTLTEAWEEAELDDADSSRIGLVVGGSNFQQRENFEVYERYQDRSGFISPAYGLSFMDSDLCGICTDQFGITGLAYTVGGASASGQLAVIHAIQQVLSGEVDTCIALGALMDLSYMECEALRALGAMGTDKYADEPENACRPFDQNRDGFIYGESCGALVIERKETALRRGLKPYAALSGWSIKLDGNRNPDPSLEGEIHVIQKALERARLLPEDIDYINPHGTGSFIGDEIELKALRACRLSHAYINATKSITGHGLSAAGIVEIISVLLQMKKSALHPSRNLDHPIDDSFHWVNEKSISYRIKNALSLSMGFGGMNTAVCIQNIEKCGGES.

In terms of domain architecture, Ketosynthase family 3 (KS3) spans leucine 6–asparagine 407.

This sequence belongs to the thiolase-like superfamily. Beta-ketoacyl-ACP synthases family.

Its subcellular location is the cytoplasm. It catalyses the reaction malonyl-[ACP] + H(+) = acetyl-[ACP] + CO2. It functions in the pathway antibiotic biosynthesis; bacillaene biosynthesis. Involved in some intermediate steps for the synthesis of the antibiotic polyketide bacillaene which is involved in secondary metabolism. It decarboxylates selectively the malonyl group attached on the acyl-carrier-protein AcpK (Mal-AcpK). The sequence is that of Polyketide biosynthesis malonyl-ACP decarboxylase PksF (pksF) from Bacillus subtilis (strain 168).